A 484-amino-acid polypeptide reads, in one-letter code: Putative amidase AmiA2 (484 aa).

Residues K93 and S167 each act as charge relay system in the active site. The active-site Acyl-ester intermediate is the S191.

Belongs to the amidase family.

The enzyme catalyses a monocarboxylic acid amide + H2O = a monocarboxylate + NH4(+). The polypeptide is Putative amidase AmiA2 (amiA2) (Mycobacterium bovis (strain ATCC BAA-935 / AF2122/97)).